The sequence spans 729 residues: Fatty acid oxidation complex subunit alpha (729 aa).

The enoyl-CoA hydratase/isomerase stretch occupies residues 1 to 189; that stretch reads MLYKGDTLYL…KIGLVDGVVK (189 aa). Asp-296 serves as a coordination point for substrate. Residues 311-729 are 3-hydroxyacyl-CoA dehydrogenase; sequence ETPKQAAVLG…ARPVGDLKTA (419 aa). NAD(+) contacts are provided by residues Met-324, Asp-343, 400-402, Lys-407, and Ser-429; that span reads VVE. His-450 serves as the catalytic For 3-hydroxyacyl-CoA dehydrogenase activity. Asn-453 contributes to the NAD(+) binding site. Residues Asn-500 and Tyr-660 each coordinate substrate. Residues 707–729 are disordered; it reads ARHNEPYYPPVEPARPVGDLKTA.

In the N-terminal section; belongs to the enoyl-CoA hydratase/isomerase family. It in the C-terminal section; belongs to the 3-hydroxyacyl-CoA dehydrogenase family. In terms of assembly, heterotetramer of two alpha chains (FadB) and two beta chains (FadA).

The catalysed reaction is a (3S)-3-hydroxyacyl-CoA + NAD(+) = a 3-oxoacyl-CoA + NADH + H(+). The enzyme catalyses a (3S)-3-hydroxyacyl-CoA = a (2E)-enoyl-CoA + H2O. It carries out the reaction a 4-saturated-(3S)-3-hydroxyacyl-CoA = a (3E)-enoyl-CoA + H2O. It catalyses the reaction (3S)-3-hydroxybutanoyl-CoA = (3R)-3-hydroxybutanoyl-CoA. The catalysed reaction is a (3Z)-enoyl-CoA = a 4-saturated (2E)-enoyl-CoA. The enzyme catalyses a (3E)-enoyl-CoA = a 4-saturated (2E)-enoyl-CoA. Its pathway is lipid metabolism; fatty acid beta-oxidation. In terms of biological role, involved in the aerobic and anaerobic degradation of long-chain fatty acids via beta-oxidation cycle. Catalyzes the formation of 3-oxoacyl-CoA from enoyl-CoA via L-3-hydroxyacyl-CoA. It can also use D-3-hydroxyacyl-CoA and cis-3-enoyl-CoA as substrate. This chain is Fatty acid oxidation complex subunit alpha, found in Escherichia coli O6:K15:H31 (strain 536 / UPEC).